The chain runs to 308 residues: Protoheme IX farnesyltransferase (308 aa).

The next 9 helical transmembrane spans lie at 31–51, 60–80, 110–130, 131–151, 157–177, 185–205, 232–252, 253–273, and 285–305; these read VGIV…AFYF, LDIV…SCVI, ALWF…MTNL, TAAG…TMWS, VNTI…WTAV, AWVL…ALAI, IIIW…LGLP, IVIL…VGYR, and FVYS…FTLF.

This sequence belongs to the UbiA prenyltransferase family. Protoheme IX farnesyltransferase subfamily. In terms of assembly, interacts with CtaA.

Its subcellular location is the cell membrane. The catalysed reaction is heme b + (2E,6E)-farnesyl diphosphate + H2O = Fe(II)-heme o + diphosphate. It functions in the pathway porphyrin-containing compound metabolism; heme O biosynthesis; heme O from protoheme: step 1/1. In terms of biological role, converts heme B (protoheme IX) to heme O by substitution of the vinyl group on carbon 2 of heme B porphyrin ring with a hydroxyethyl farnesyl side group. The chain is Protoheme IX farnesyltransferase from Bacillus licheniformis (strain ATCC 14580 / DSM 13 / JCM 2505 / CCUG 7422 / NBRC 12200 / NCIMB 9375 / NCTC 10341 / NRRL NRS-1264 / Gibson 46).